Here is a 277-residue protein sequence, read N- to C-terminus: Adenylate kinase (277 aa).

An ATP-binding site is contributed by 53-58; the sequence is GAGKGT. The tract at residues 73-102 is NMP; the sequence is ATGDMLRAQVAAKTPLGREAKKIMDAGGLV. AMP contacts are provided by residues Thr-74, Arg-79, 100-102, 129-132, and Gln-136; these read GLV and GFPR. An LID region spans residues 170–207; that stretch reads GRLVHPASGRSYHKIFNPPKAPMTDDATGEPLIQRSDD. ATP-binding positions include Arg-171 and 180–181; that span reads SY. Arg-204 and Arg-215 together coordinate AMP. Gln-243 contributes to the ATP binding site.

It belongs to the adenylate kinase family. AK2 subfamily. As to quaternary structure, monomer.

It is found in the cytoplasm. It localises to the cytosol. Its subcellular location is the mitochondrion intermembrane space. It catalyses the reaction AMP + ATP = 2 ADP. Catalyzes the reversible transfer of the terminal phosphate group between ATP and AMP. Plays an important role in cellular energy homeostasis and in adenine nucleotide metabolism. Adenylate kinase activity is critical for regulation of the phosphate utilization and the AMP de novo biosynthesis pathways. The protein is Adenylate kinase of Phaeosphaeria nodorum (strain SN15 / ATCC MYA-4574 / FGSC 10173) (Glume blotch fungus).